The primary structure comprises 320 residues: 1-aminocyclopropane-1-carboxylate oxidase (320 aa).

Positions 154 to 254 constitute a Fe2OG dioxygenase domain; it reads PTFGTKVSNY…RMSLASFYNP (101 aa). Fe cation-binding residues include histidine 178, aspartate 180, and histidine 235.

This sequence belongs to the iron/ascorbate-dependent oxidoreductase family. The cofactor is Fe cation.

The enzyme catalyses 1-aminocyclopropane-1-carboxylate + L-ascorbate + O2 = ethene + L-dehydroascorbate + hydrogen cyanide + CO2 + 2 H2O. It participates in alkene biosynthesis; ethylene biosynthesis via S-adenosyl-L-methionine; ethylene from S-adenosyl-L-methionine: step 2/2. This Persea americana (Avocado) protein is 1-aminocyclopropane-1-carboxylate oxidase (ACO).